The chain runs to 643 residues: Transducer protein Htr8 (643 aa).

Helical transmembrane passes span 48 to 68 (VFVL…GTES), 79 to 99 (PGIL…LASI), 115 to 134 (VLAS…EAHF), 149 to 169 (WLPF…FGMI), and 184 to 204 (PWVW…ALMA). An HAMP domain is found at 273–326 (ERLEATANTYGAAMARAADGDLSVRLDPDVENDAMAAIAASFNEMLDETETTIR). The region spanning 345–581 (GVVEIEDASG…EAVSMIAEVS (237 aa)) is the Methyl-accepting transducer domain.

The protein belongs to the methyl-accepting chemotaxis (MCP) protein family. Methylated by CheR.

It is found in the cell membrane. Functionally, potentially involved in chemo- or phototactic signal transduction. The chain is Transducer protein Htr8 (htr8) from Halobacterium salinarum (strain ATCC 29341 / DSM 671 / R1).